The primary structure comprises 873 residues: Potassium voltage-gated channel subfamily KQT member 3 (873 aa).

The interval 1–41 is disordered; that stretch reads MGLKARRAAGAAGGGGGEGGGGGGGAANPAGGDSAVAGDEE. The Cytoplasmic segment spans residues 1 to 121; it reads MGLKARRAAG…IYDALERPRG (121 aa). The span at 11-26 shows a compositional bias: gly residues; that stretch reads AAGGGGGEGGGGGGGA. At Thr-82 the chain carries Phosphothreonine. Residues 122-144 form a helical membrane-spanning segment; that stretch reads WALLYHALVFLIVLGCLILAVLT. The Extracellular segment spans residues 145 to 154; the sequence is TFKEYETVSG. The chain crosses the membrane as a helical span at residues 155–176; sequence DWLLLLETFAIFIFGAEFALRI. The Cytoplasmic portion of the chain corresponds to 177-194; the sequence is WAAGCCCRYKGWRGRLKF. Residues 195–214 form a helical membrane-spanning segment; sequence ARKPLCMLDIFVLIASVPVV. Residues 215–226 lie on the Extracellular side of the membrane; sequence AVGNQGNVLATS. Residues 227–245 form a helical; Voltage-sensor membrane-spanning segment; that stretch reads LRSLRFLQILRMLRMDRRG. Position 244 (Arg-244) interacts with a 1,2-diacyl-sn-glycero-3-phospho-(1D-myo-inositol-4,5-bisphosphate). The Cytoplasmic portion of the chain corresponds to 246–257; that stretch reads GTWKLLGSAICA. A helical membrane pass occupies residues 258–283; the sequence is HSKELITAWYIGFLTLILSSFLVYLV. Lys-260 is an a 1,2-diacyl-sn-glycero-3-phospho-(1D-myo-inositol-4,5-bisphosphate) binding site. At 284–303 the chain is on the extracellular side; it reads EKDVPEMDAQGEEMKEEFET. An intramembrane region (pore-forming) is located at residues 304–316; sequence YADALWWGLITLA. Positions 317 to 322 match the Selectivity filter motif; it reads TIGYGD. The Extracellular portion of the chain corresponds to 317 to 327; that stretch reads TIGYGDKTPKT. A helical membrane pass occupies residues 328–354; sequence WEGRLIAATFSLIGVSFFALPAGILGS. Over 355 to 873 the chain is Cytoplasmic; it reads GLALKVQEQH…SIWTPSNKPT (519 aa). The interval 357–538 is mediates interaction with calmodulin; sequence ALKVQEQHRQ…RLYKKKFKET (182 aa). Lys-367 contributes to the a 1,2-diacyl-sn-glycero-3-phospho-(1D-myo-inositol-4,5-bisphosphate) binding site. 3 disordered regions span residues 575 to 603, 723 to 742, and 766 to 873; these read PGPP…PRNE, RGGP…GSTY, and ELQG…NKPT. Composition is skewed to polar residues over residues 588–601, 725–741, and 844–873; these read KGSA…QSPR, GPSS…SGST, and DPFT…NKPT.

This sequence belongs to the potassium channel family. KQT (TC 1.A.1.15) subfamily. Kv7.3/KCNQ3 sub-subfamily. Heterotetramer with KCNQ2; forms heterotetrameric native M-channel responsible for the M-current. Interacts with calmodulin; the interaction is calcium-independent, constitutive and participates in the proper assembly of a functional M-channel. Heteromultimer with KCNQ5. May associate with KCNE2. Interacts with IQCJ-SCHIP1. Interacts (via the pore module) with SLC5A3/SMIT1; forms a coregulatory complex that alters ion selectivity, voltage dependence and gating kinetics of the channel. KCNQ2/KCNQ3 are ubiquitinated by NEDD4L. Ubiquitination leads to protein degradation. Degradation induced by NEDD4L is inhibited by USP36. As to expression, expressed in dorsal root ganglion (DRG) neurons.

Its subcellular location is the cell membrane. It carries out the reaction K(+)(in) = K(+)(out). It catalyses the reaction Rb(+)(in) = Rb(+)(out). The catalysed reaction is Cs(+)(in) = Cs(+)(out). The enzyme catalyses Na(+)(in) = Na(+)(out). Its activity is regulated as follows. Phosphatidylinositol-4,5-bisphosphate (PIP2) potentiates the activation of KCNQ channels by enhancing the electro-mechanical coupling of the voltage-sensing domain (VSD) and the pore-forming domain (PD). In the closed state of the channel, PIP2 is anchored at the S2-S3 loop; upon channel activation, PIP2 interacts with the S4-S5 linker and is involved in channel gating. Calcium suppresses KCNQ2-KCNQ3 channel currents, with calcium-bound calmodulin inducing a change in channel configuration which leads to the reduction of channel affinity for PIP2 and subsequent current suppression. Pore-forming subunit of the voltage-gated potassium (Kv) M-channel which is responsible for the M-current, a key controller of neuronal excitability. M-channel is composed of pore-forming subunits KCNQ2 and KCNQ3 assembled as heterotetramers. The native M-current has a slowly activating and deactivating potassium conductance which plays a critical role in determining the subthreshold electrical excitability of neurons as well as the responsiveness to synaptic inputs. M-channel is selectively permeable in vitro to other cations besides potassium, in decreasing order of affinity K(+) &gt; Rb(+) &gt; Cs(+) &gt; Na(+). M-channel association with SLC5A3/SMIT1 alters channel ion selectivity, increasing Na(+) and Cs(+) permeation relative to K(+). Suppressed by activation of M1 muscarinic acetylcholine receptors. KCNQ3 also associates with KCNQ5 to form a functional channel in vitro and may also contribute to the M-current in brain. The chain is Potassium voltage-gated channel subfamily KQT member 3 from Mus musculus (Mouse).